We begin with the raw amino-acid sequence, 97 residues long: Osteocalcin (97 aa).

Residues 1–18 (MKTLAFLVLCSLAAICLT) form the signal peptide. A propeptide spanning residues 19-52 (SDASTGSQPASDNPADEGMFVERDQASAVVRQKR) is cleaved from the precursor. The region spanning 53-93 (AAGQLSLTQLESLREVCELNLACEHMMDTEGIIAAYTAYYG) is the Gla domain. Positions 63, 67, 70, and 76 each coordinate Ca(2+). Residues glutamate 63, glutamate 67, and glutamate 70 each carry the 4-carboxyglutamate modification. An intrachain disulfide couples cysteine 69 to cysteine 75.

The protein belongs to the osteocalcin/matrix Gla protein family. In terms of processing, gamma-carboxyglutamate residues are formed by vitamin K dependent carboxylation by GGCX. These residues are essential for the binding of calcium.

It localises to the secreted. In terms of biological role, the carboxylated form is one of the main organic components of the bone matrix, which constitutes 1-2% of the total bone protein. The carboxylated form binds strongly to apatite and calcium. This Sparus aurata (Gilthead sea bream) protein is Osteocalcin (bglap).